A 442-amino-acid polypeptide reads, in one-letter code: Serine--tRNA ligase (442 aa).

Residue 249 to 251 (TSE) coordinates L-serine. 280-282 (RSE) is an ATP binding site. Position 303 (Glu303) interacts with L-serine. 367-370 (EISS) lines the ATP pocket. Ser402 provides a ligand contact to L-serine.

This sequence belongs to the class-II aminoacyl-tRNA synthetase family. Type-1 seryl-tRNA synthetase subfamily. As to quaternary structure, homodimer. The tRNA molecule binds across the dimer.

It localises to the cytoplasm. It catalyses the reaction tRNA(Ser) + L-serine + ATP = L-seryl-tRNA(Ser) + AMP + diphosphate + H(+). The enzyme catalyses tRNA(Sec) + L-serine + ATP = L-seryl-tRNA(Sec) + AMP + diphosphate + H(+). The protein operates within aminoacyl-tRNA biosynthesis; selenocysteinyl-tRNA(Sec) biosynthesis; L-seryl-tRNA(Sec) from L-serine and tRNA(Sec): step 1/1. Catalyzes the attachment of serine to tRNA(Ser). Is also able to aminoacylate tRNA(Sec) with serine, to form the misacylated tRNA L-seryl-tRNA(Sec), which will be further converted into selenocysteinyl-tRNA(Sec). This chain is Serine--tRNA ligase, found in Acidovorax ebreus (strain TPSY) (Diaphorobacter sp. (strain TPSY)).